The primary structure comprises 32 residues: Cytochrome b6-f complex subunit 7 (32 aa).

A helical transmembrane segment spans residues 9-29 (AILSSVLVLVGLAVGFLLLKV).

This sequence belongs to the PetM family. In terms of assembly, the 4 large subunits of the cytochrome b6-f complex are cytochrome b6, subunit IV (17 kDa polypeptide, PetD), cytochrome f and the Rieske protein, while the 4 small subunits are PetG, PetL, PetM and PetN. The complex functions as a dimer.

Its subcellular location is the plastid. The protein resides in the chloroplast thylakoid membrane. Component of the cytochrome b6-f complex, which mediates electron transfer between photosystem II (PSII) and photosystem I (PSI), cyclic electron flow around PSI, and state transitions. The protein is Cytochrome b6-f complex subunit 7 of Porphyra purpurea (Red seaweed).